Consider the following 398-residue polypeptide: Secreted aspartic protease 2 (398 aa).

The N-terminal stretch at 1-18 (MFLKNIFIALAIALLVDA) is a signal peptide. Positions 19-56 (TPTTTKRSAGFVALDFSVVKTPKAFPVTNGQEGKTSKR) are cleaved as a propeptide — activation peptide. The Peptidase A1 domain maps to 70-384 (YAADITVGSN…DLDDNEISLA (315 aa)). Aspartate 88 is a catalytic residue. Residue 88–90 (DTG) coordinates pepstatin A. An intrachain disulfide couples cysteine 103 to cysteine 115. Residue 141–142 (GD) participates in pepstatin A binding. Zn(2+) is bound by residues aspartate 247 and aspartate 270. Residue aspartate 274 is part of the active site. A pepstatin A-binding site is contributed by 274–278 (DSGTT). Cysteines 312 and 350 form a disulfide. 2 N-linked (GlcNAc...) asparagine glycosylation sites follow: asparagine 313 and asparagine 321.

This sequence belongs to the peptidase A1 family. In terms of assembly, monomer.

It localises to the secreted. The catalysed reaction is Preferential cleavage at the carboxyl of hydrophobic amino acids, but fails to cleave 15-Leu-|-Tyr-16, 16-Tyr-|-Leu-17 and 24-Phe-|-Phe-25 of insulin B chain. Activates trypsinogen, and degrades keratin.. Functionally, secreted aspartic peptidases (SAPs) are a group of ten acidic hydrolases considered as key virulence factors. These enzymes supply the fungus with nutrient amino acids as well as are able to degrade the selected host's proteins involved in the immune defense. Induces host inflammatory cytokine production in a proteolytic activity-independent way. Plays a role in tissue damage during superficial infection. Moreover, acts toward human hemoglobin though limited proteolysis to generate a variety of antimicrobial hemocidins, enabling to compete with the other microorganisms of the same physiological niche using the microbicidal peptides generated from the host protein. Plays a key role in defense against host by cleaving histatin-5 (Hst 5), a peptide from human saliva that carries out fungicidal activity. The cleavage rate decreases in an order of SAP2 &gt; SAP9 &gt; SAP3 &gt; SAP7 &gt; SAP4 &gt; SAP1 &gt; SAP8. The first cleavage occurs between residues 'Lys-17' and 'His-18' of Hst 5, giving DSHAKRHHGYKRKFHEK and HHSHRGY peptides. Simultaneously, the DSHAKRHHGYKRK peptide is also formed. Further fragmentation by SAP2 results in FHEK and DSHAKRHHGY products. The sequence is that of Secreted aspartic protease 2 from Candida albicans (Yeast).